Reading from the N-terminus, the 411-residue chain is Peptidase T (411 aa).

Residue histidine 78 coordinates Zn(2+). The active site involves aspartate 80. Residue aspartate 140 participates in Zn(2+) binding. The active-site Proton acceptor is glutamate 173. Residues glutamate 174, aspartate 196, and histidine 379 each coordinate Zn(2+).

This sequence belongs to the peptidase M20B family. Requires Zn(2+) as cofactor.

It localises to the cytoplasm. It carries out the reaction Release of the N-terminal residue from a tripeptide.. In terms of biological role, cleaves the N-terminal amino acid of tripeptides. The polypeptide is Peptidase T (Yersinia pseudotuberculosis serotype O:3 (strain YPIII)).